The chain runs to 484 residues: Glycogen synthase 2 (484 aa).

An ADP-alpha-D-glucose-binding site is contributed by K15.

The protein belongs to the glycosyltransferase 1 family. Bacterial/plant glycogen synthase subfamily.

The catalysed reaction is [(1-&gt;4)-alpha-D-glucosyl](n) + ADP-alpha-D-glucose = [(1-&gt;4)-alpha-D-glucosyl](n+1) + ADP + H(+). The protein operates within glycan biosynthesis; glycogen biosynthesis. Functionally, synthesizes alpha-1,4-glucan chains using ADP-glucose. The protein is Glycogen synthase 2 of Geobacter metallireducens (strain ATCC 53774 / DSM 7210 / GS-15).